A 166-amino-acid chain; its full sequence is Cyanate hydratase (166 aa).

Active-site residues include R92, E95, and S118.

The protein belongs to the cyanase family.

The catalysed reaction is cyanate + hydrogencarbonate + 3 H(+) = NH4(+) + 2 CO2. Catalyzes the reaction of cyanate with bicarbonate to produce ammonia and carbon dioxide. The chain is Cyanate hydratase from Zea mays (Maize).